Reading from the N-terminus, the 103-residue chain is Zinc-containing ferredoxin (103 aa).

An N-terminal extension region spans residues 1–36 (GIDPNYRTSKPVVGDHSGHKIYGPVESPKVLGVHGT). Histidine 19 contributes to the Zn(2+) binding site. Lysine 29 carries the N6-methyllysine modification. A Zn(2+)-binding site is contributed by histidine 34. 4Fe-4S ferredoxin-type domains lie at 35–65 (GTIVGVDFDLCIADGSCITACPVNVFQWYET) and 74–103 (KADPVNEQACIFCMACVNVCPVAAIDVKPP). [3Fe-4S] cluster is bound by residues cysteine 45 and cysteine 51. [4Fe-4S] cluster is bound at residue cysteine 55. Zn(2+) is bound at residue aspartate 76. [4Fe-4S] cluster-binding residues include cysteine 83, cysteine 86, and cysteine 89. Cysteine 93 is a binding site for [3Fe-4S] cluster.

[3Fe-4S] cluster serves as cofactor. It depends on [4Fe-4S] cluster as a cofactor. The cofactor is Zn(2+).

Its function is as follows. Ferredoxins are iron-sulfur proteins that transfer electrons in a wide variety of metabolic reactions. This is Zinc-containing ferredoxin (zfx) from Sulfolobus acidocaldarius (strain ATCC 33909 / DSM 639 / JCM 8929 / NBRC 15157 / NCIMB 11770).